A 269-amino-acid polypeptide reads, in one-letter code: Hydroxyethylthiazole kinase (269 aa).

Position 41 (M41) interacts with substrate. ATP is bound by residues R117 and S163. Position 190 (G190) interacts with substrate.

Belongs to the Thz kinase family. Requires Mg(2+) as cofactor.

It carries out the reaction 5-(2-hydroxyethyl)-4-methylthiazole + ATP = 4-methyl-5-(2-phosphooxyethyl)-thiazole + ADP + H(+). The protein operates within cofactor biosynthesis; thiamine diphosphate biosynthesis; 4-methyl-5-(2-phosphoethyl)-thiazole from 5-(2-hydroxyethyl)-4-methylthiazole: step 1/1. In terms of biological role, catalyzes the phosphorylation of the hydroxyl group of 4-methyl-5-beta-hydroxyethylthiazole (THZ). The chain is Hydroxyethylthiazole kinase from Latilactobacillus sakei subsp. sakei (strain 23K) (Lactobacillus sakei subsp. sakei).